The chain runs to 44 residues: Large ribosomal subunit protein bL34 (44 aa).

Basic residues-rich tracts occupy residues 1–14 and 31–44; these read MKRT…KRQK and LSAR…RLAV. The tract at residues 1–44 is disordered; that stretch reads MKRTLGGTTRKRQKTSGFRARMRTASGRRVLSARRRRGRHRLAV.

It belongs to the bacterial ribosomal protein bL34 family.

This chain is Large ribosomal subunit protein bL34, found in Gloeobacter violaceus (strain ATCC 29082 / PCC 7421).